The following is a 630-amino-acid chain: L-amino-acid oxidase (630 aa).

An N-terminal signal peptide occupies residues 1–21 (MAGLALRLVLAATLLGLAGSL). Cysteines 35 and 198 form a disulfide. Asparagine 53 carries N-linked (GlcNAc...) asparagine glycosylation. FAD contacts are provided by residues 68–69 (VA), 88–89 (EA), arginine 96, and 112–115 (GAMR). Substrate is bound at residue arginine 115. 2 N-linked (GlcNAc...) asparagine glycosylation sites follow: asparagine 133 and asparagine 219. Valine 286 contributes to the FAD binding site. Position 395 (tyrosine 395) interacts with substrate. FAD-binding positions include glutamate 479 and 486–491 (GWVETA). Residue 486–487 (GW) participates in substrate binding. A disordered region spans residues 532–554 (GERPEEQQAREEVSPDEQEPSHK).

The protein belongs to the flavin monoamine oxidase family. FIG1 subfamily. Requires FAD as cofactor. As to expression, primarily found in immune tissues. In terms of tissue distribution, primarily found in immune tissues, mostly in B-lymphocytes. Restricted to the testis, predominantly in Sertoli cells at the periphery of the ducts, and the brain, including Purkinje cells, hippocampus and mitral cells in the olfactory bulb. No isoform 2 expression in fetal tissues.

It localises to the secreted. It is found in the cytoplasmic vesicle. The protein resides in the secretory vesicle. The protein localises to the acrosome. Its subcellular location is the lysosome. The catalysed reaction is an L-alpha-amino acid + O2 + H2O = a 2-oxocarboxylate + H2O2 + NH4(+). It carries out the reaction L-tryptophan + O2 + H2O = indole-3-pyruvate + H2O2 + NH4(+). It catalyses the reaction L-phenylalanine + O2 + H2O = 3-phenylpyruvate + H2O2 + NH4(+). The enzyme catalyses L-tyrosine + O2 + H2O = 3-(4-hydroxyphenyl)pyruvate + H2O2 + NH4(+). The catalysed reaction is L-arginine + O2 + H2O = 5-guanidino-2-oxopentanoate + H2O2 + NH4(+). The protein operates within amino-acid degradation; L-tryptophan degradation via pyruvate pathway. Its function is as follows. Secreted L-amino-acid oxidase that acts as a key immunoregulator. Has preference for L-aromatic amino acids: converts phenylalanine (Phe), tyrosine (Tyr) and tryptophan (Trp) to phenylpyruvic acid (PP), hydroxyphenylpyruvic acid (HPP), and indole-3-pyruvic acid (I3P), respectively. Also has weak L-arginine oxidase activity. Acts as a negative regulator of anti-tumor immunity by mediating Trp degradation via an indole pyruvate pathway that activates the transcription factor AHR. IL4I1-mediated Trp catabolism generates I3P, giving rise to indole metabolites (indole-3-acetic acid (IAA) and indole-3-aldehyde (I3A)) and kynurenic acid, which act as ligands for AHR, a ligand-activated transcription factor that plays important roles in immunity and cancer. AHR activation by indoles following IL4I1-mediated Trp degradation enhances tumor progression by promoting cancer cell motility and suppressing adaptive immunity. Also has an immunoregulatory function in some immune cell, probably by mediating Trp degradation and promoting downstream AHR activation: inhibits T-cell activation and proliferation, promotes the differentiation of naive CD4(+) T-cells into FOXP3(+) regulatory T-cells (Treg) and regulates the development and function of B-cells. Also regulates M2 macrophage polarization by inhibiting T-cell activation. Also has antibacterial properties by inhibiting growth of Gram negative and Gram positive bacteria through the production of NH4(+) and H2O2. This Mus musculus (Mouse) protein is L-amino-acid oxidase.